A 250-amino-acid chain; its full sequence is UPF0736 protein BLi01230/BL03322 (250 aa).

This sequence belongs to the UPF0736 family.

This is UPF0736 protein BLi01230/BL03322 from Bacillus licheniformis (strain ATCC 14580 / DSM 13 / JCM 2505 / CCUG 7422 / NBRC 12200 / NCIMB 9375 / NCTC 10341 / NRRL NRS-1264 / Gibson 46).